Here is a 317-residue protein sequence, read N- to C-terminus: SWI/SNF-related matrix-associated actin-dependent regulator of chromatin subfamily E member 1-related (317 aa).

Low complexity predominate over residues 1-22; it reads MSHGPKQPGAASAPASGKAPGQ. Positions 1–71 are disordered; sequence MSHGPKQPGA…RKKILPNGPK (71 aa). K31 participates in a covalent cross-link: Glycyl lysine isopeptide (Lys-Gly) (interchain with G-Cter in SUMO2). The span at 31–52 shows a compositional bias: basic and acidic residues; that stretch reads KQERGEGPRAGEKGSHEEEPVK. Basic residues predominate over residues 53-65; it reads KRGWPKGKKRKKI. Positions 70-138 form a DNA-binding region, HMG box; it reads PKAPVTGYVR…QYMKELRAYQ (69 aa). Phosphoserine is present on S160. Residues 190–257 are a coiled coil; sequence EEFLDQNKAR…LQQQLQAVRQ (68 aa).

Component of a BHC histone deacetylase complex that contains HDAC1, HDAC2, HMG20B/BRAF35, KDM1A, RCOR1/CoREST and PHF21A/BHC80. The BHC complex may also contain ZMYM2, ZNF217, ZMYM3, GSE1 and GTF2I. Interacts with the BRCA2 tumor suppressor protein.

It localises to the nucleus. The protein resides in the chromosome. Its function is as follows. Required for correct progression through G2 phase of the cell cycle and entry into mitosis. Required for RCOR1/CoREST mediated repression of neuronal specific gene promoters. In Bos taurus (Bovine), this protein is SWI/SNF-related matrix-associated actin-dependent regulator of chromatin subfamily E member 1-related (HMG20B).